The following is a 227-amino-acid chain: 2-C-methyl-D-erythritol 4-phosphate cytidylyltransferase (227 aa).

It belongs to the IspD/TarI cytidylyltransferase family. IspD subfamily.

It catalyses the reaction 2-C-methyl-D-erythritol 4-phosphate + CTP + H(+) = 4-CDP-2-C-methyl-D-erythritol + diphosphate. It functions in the pathway isoprenoid biosynthesis; isopentenyl diphosphate biosynthesis via DXP pathway; isopentenyl diphosphate from 1-deoxy-D-xylulose 5-phosphate: step 2/6. In terms of biological role, catalyzes the formation of 4-diphosphocytidyl-2-C-methyl-D-erythritol from CTP and 2-C-methyl-D-erythritol 4-phosphate (MEP). The sequence is that of 2-C-methyl-D-erythritol 4-phosphate cytidylyltransferase from Mycobacterium marinum (strain ATCC BAA-535 / M).